The following is a 1296-amino-acid chain: Probable serine/threonine protein kinase IREH1 (1296 aa).

Disordered regions lie at residues 1 to 274, 457 to 480, and 524 to 553; these read MVFK…SESP, SGAG…QEQH, and SPAL…VGSR. Over residues 10–32 the composition is skewed to low complexity; that stretch reads SSKKSGSSSPDSSNSPRSVGSNS. The residue at position 32 (Ser32) is a Phosphoserine. Composition is skewed to basic and acidic residues over residues 68-77, 101-112, and 178-208; these read DGLKKKDGSS, EVKKPPPPEVKE, and RKKE…RDSL. Residues 214-249 are compositionally biased toward low complexity; that stretch reads PPRSLSPTLPPSGSRLQNVASSSGTGRSEMSSGRSG. The C2H2-type; atypical zinc finger occupies 602–621; it reads CRICEEEVPTTHVEDHSRVC. Residues 724–750 form a disordered region; it reads FGPKSDQGMTTSSASSMTPRSPIPTPR. Residues 730 to 740 are compositionally biased toward polar residues; sequence QGMTTSSASSM. In terms of domain architecture, Protein kinase spans 882–1171; it reads FEIIKPISRG…AAEVKQHIFF (290 aa). ATP-binding positions include 888 to 896 and Lys911; that span reads ISRGAFGRV. Asp1005 serves as the catalytic Proton acceptor. Ser1070 is modified (phosphoserine). An AGC-kinase C-terminal domain is found at 1172–1277; that stretch reads KDINWDTLAR…KNLSQLASIN (106 aa). Residues 1214–1245 are disordered; it reads PSGEVPDYSDADSMTNSSGCSSNHHEEGEAEE. Positions 1225-1235 are enriched in polar residues; that stretch reads DSMTNSSGCSS. The span at 1236–1245 shows a compositional bias: basic and acidic residues; sequence NHHEEGEAEE.

This sequence belongs to the protein kinase superfamily. AGC Ser/Thr protein kinase family.

The enzyme catalyses L-seryl-[protein] + ATP = O-phospho-L-seryl-[protein] + ADP + H(+). It carries out the reaction L-threonyl-[protein] + ATP = O-phospho-L-threonyl-[protein] + ADP + H(+). Its function is as follows. May be involved in root hair elongation. The polypeptide is Probable serine/threonine protein kinase IREH1 (Arabidopsis thaliana (Mouse-ear cress)).